Consider the following 318-residue polypeptide: Sensor histidine kinase NatK (318 aa).

The next 3 helical transmembrane spans lie at 4 to 24, 27 to 47, and 72 to 82; these read LFQC…AAAF, STAA…LYIW, and VGVVLIGTDIM. The 187-residue stretch at 132 to 318 folds into the Histidine kinase domain; the sequence is RNHDTMKHIT…RLEIKIPFQK (187 aa). Phosphohistidine; by autocatalysis is present on H134.

The protein localises to the cell membrane. It carries out the reaction ATP + protein L-histidine = ADP + protein N-phospho-L-histidine.. Its function is as follows. Member of the two-component regulatory system NatK/NatR that positively regulates the expression of the natAB operon. Potentially phosphorylates NatR. This Bacillus subtilis (strain 168) protein is Sensor histidine kinase NatK.